Consider the following 446-residue polypeptide: 5-methylthioadenosine/S-adenosylhomocysteine deaminase (446 aa).

His-72 and His-74 together coordinate Zn(2+). Residues Glu-101 and His-194 each coordinate substrate. His-221 is a Zn(2+) binding site. Residues Glu-224 and Asp-309 each coordinate substrate. Position 309 (Asp-309) interacts with Zn(2+).

It belongs to the metallo-dependent hydrolases superfamily. MTA/SAH deaminase family. It depends on Zn(2+) as a cofactor.

The catalysed reaction is S-adenosyl-L-homocysteine + H2O + H(+) = S-inosyl-L-homocysteine + NH4(+). The enzyme catalyses S-methyl-5'-thioadenosine + H2O + H(+) = S-methyl-5'-thioinosine + NH4(+). In terms of biological role, catalyzes the deamination of 5-methylthioadenosine and S-adenosyl-L-homocysteine into 5-methylthioinosine and S-inosyl-L-homocysteine, respectively. Is also able to deaminate adenosine. This is 5-methylthioadenosine/S-adenosylhomocysteine deaminase from Saccharophagus degradans (strain 2-40 / ATCC 43961 / DSM 17024).